Consider the following 208-residue polypeptide: Heavy metal-associated isoprenylated plant protein 42 (208 aa).

The HMA domain maps to 6-70; the sequence is FPICILKMNL…AVAKLGQSPQ (65 aa). The disordered stretch occupies residues 93 to 116; sequence ATNKTQDKPSPPAPPVTATTPVET. Cys205 is subject to Cysteine methyl ester. A lipid anchor (S-farnesyl cysteine) is attached at Cys205. The propeptide at 206–208 is removed in mature form; the sequence is SIM.

It belongs to the HIPP family.

Its function is as follows. Probable heavy-metal-binding protein. In Arabidopsis thaliana (Mouse-ear cress), this protein is Heavy metal-associated isoprenylated plant protein 42.